We begin with the raw amino-acid sequence, 33 residues long: GLLDSIKGMAISAGKGALQNLLKVASCKLDKTC.

The cysteines at positions 27 and 33 are disulfide-linked.

This sequence belongs to the frog skin active peptide (FSAP) family. Brevinin subfamily. Expressed by the skin dorsal glands.

It is found in the secreted. In terms of biological role, shows antibacterial activity against both Gram-positive and Gram-negative bacteria and against the fungus C.albicans. Has no hemolytic activity. This chain is Nigrocin-1, found in Pelophylax nigromaculatus (Black-spotted frog).